The following is a 399-amino-acid chain: Coenzyme A biosynthesis bifunctional protein CoaBC (399 aa).

The tract at residues 1-190 is phosphopantothenoylcysteine decarboxylase; sequence MQSLAGKKIL…FAPKILVGKR (190 aa). Catalysis depends on Cys-159, which acts as the Proton donor. The interval 191-399 is phosphopantothenate--cysteine ligase; sequence VLITAGPTRE…AVMHLIHEQM (209 aa). CTP contacts are provided by residues Asp-279, Lys-289, 307–310, Phe-326, Lys-340, and Lys-344; that span reads PDIV.

This sequence in the N-terminal section; belongs to the HFCD (homo-oligomeric flavin containing Cys decarboxylase) superfamily. The protein in the C-terminal section; belongs to the PPC synthetase family. Requires Mg(2+) as cofactor. FMN is required as a cofactor.

It carries out the reaction N-[(R)-4-phosphopantothenoyl]-L-cysteine + H(+) = (R)-4'-phosphopantetheine + CO2. The catalysed reaction is (R)-4'-phosphopantothenate + L-cysteine + CTP = N-[(R)-4-phosphopantothenoyl]-L-cysteine + CMP + diphosphate + H(+). Its pathway is cofactor biosynthesis; coenzyme A biosynthesis; CoA from (R)-pantothenate: step 2/5. It participates in cofactor biosynthesis; coenzyme A biosynthesis; CoA from (R)-pantothenate: step 3/5. Catalyzes two sequential steps in the biosynthesis of coenzyme A. In the first step cysteine is conjugated to 4'-phosphopantothenate to form 4-phosphopantothenoylcysteine. In the second step the latter compound is decarboxylated to form 4'-phosphopantotheine. In Vibrio cholerae serotype O1 (strain ATCC 39315 / El Tor Inaba N16961), this protein is Coenzyme A biosynthesis bifunctional protein CoaBC.